The sequence spans 471 residues: Sestrin-2 (471 aa).

Met-1 is modified (N-acetylmethionine). Residues 57 to 230 (GLEALMSSGR…APSPPSEQST (174 aa)) form an N-terminal domain; mediates the alkylhydroperoxide reductase activity region. Residue Cys-116 is the Cysteine sulfenic acid (-SOH) intermediate of the active site. Residue Lys-166 forms a Glycyl lysine isopeptide (Lys-Gly) (interchain with G-Cter in ubiquitin) linkage. Positions 212 to 241 (DPEGSPAPQAPSPPSEQSTPPSRDSLNHSG) are disordered. Ser-240 carries the phosphoserine modification. The segment at 299-471 (ANPDMLCFVE…ALRAITRYMT (173 aa)) is C-terminal domain; mediates TORC1 regulation. L-leucine contacts are provided by residues 365-368 (TYNT), Thr-377, and Glu-442.

This sequence belongs to the sestrin family. Interacts with the GATOR2 complex which is composed of MIOS, SEC13, SEH1L, WDR24 and WDR59; the interaction is negatively regulated by leucine. Conveys leucine availability via direct interaction with SEH1L and WDR24 components of the GATOR2 complex. Interacts with RRAGA, RRAGB, RRAGC and RRAGD; may function as a guanine nucleotide dissociation inhibitor for RRAGs and regulate them. May interact with the TORC2 complex. Interacts with KEAP1, RBX1, SQSTM and ULK1; to regulate the degradation of KEAP1. May also associate with the complex composed of TSC1, TSC2 and the AMP-responsive protein kinase/AMPK to regulate TORC1 signaling. May interact with PRDX1. In terms of processing, phosphorylated by ULK1 at multiple sites. Post-translationally, ubiquitinated at Lys-166 by RNF167 via 'Lys-63'-linked polyubiquitination in response to leucine deprivation: ubiquitination promotes SESN2-interaction with the GATOR2 complex, leading to inhibit the TORC1 signaling pathway. Deubiquitinated at Lys-166 by STAMBPL1, promoting the TORC1 signaling pathway. Ubiquitinated by RNF186; ubiquitination mediates proteasomal degradation.

Its subcellular location is the cytoplasm. The enzyme catalyses a hydroperoxide + L-cysteinyl-[protein] = S-hydroxy-L-cysteinyl-[protein] + an alcohol. In terms of biological role, functions as an intracellular leucine sensor that negatively regulates the mTORC1 signaling pathway through the GATOR complex. In absence of leucine, binds the GATOR subcomplex GATOR2 and prevents mTORC1 signaling. Binding of leucine to SESN2 disrupts its interaction with GATOR2 thereby activating the TORC1 signaling pathway. This stress-inducible metabolic regulator also plays a role in protection against oxidative and genotoxic stresses. May negatively regulate protein translation in response to endoplasmic reticulum stress, via mTORC1. May positively regulate the transcription by NFE2L2 of genes involved in the response to oxidative stress by facilitating the SQSTM1-mediated autophagic degradation of KEAP1. May also mediate TP53 inhibition of TORC1 signaling upon genotoxic stress. Moreover, may prevent the accumulation of reactive oxygen species (ROS) through the alkylhydroperoxide reductase activity born by the N-terminal domain of the protein. Was originally reported to contribute to oxidative stress resistance by reducing PRDX1. However, this could not be confirmed. The protein is Sestrin-2 of Bos taurus (Bovine).